A 488-amino-acid chain; its full sequence is Catalase (488 aa).

Residues 1 to 24 (MTDRRNLTTNQGVPIGDNQNSMTA) form a disordered region. The segment covering 7-23 (LTTNQGVPIGDNQNSMT) has biased composition (polar residues). Active-site residues include H55 and N128. Y338 is a heme binding site.

The protein belongs to the catalase family. Heme serves as cofactor.

Its subcellular location is the cytoplasm. The enzyme catalyses 2 H2O2 = O2 + 2 H2O. Decomposes hydrogen peroxide into water and oxygen; serves to protect cells from the toxic effects of hydrogen peroxide. The chain is Catalase (kat) from Listeria seeligeri.